The primary structure comprises 577 residues: Probable L-gulonolactone oxidase 4 (577 aa).

The N-terminal stretch at 1–17 (MSFWLSLIFCFFTFASS) is a signal peptide. The 183-residue stretch at 46–228 (SICKAAKVEY…SQVTFELQPM (183 aa)) folds into the FAD-binding PCMH-type domain.

Belongs to the oxygen-dependent FAD-linked oxidoreductase family. The cofactor is FAD.

The enzyme catalyses L-gulono-1,4-lactone + O2 = L-ascorbate + H2O2 + H(+). The protein operates within cofactor biosynthesis; L-ascorbate biosynthesis. May be involved in the biosynthesis of ascorbic acid. The sequence is that of Probable L-gulonolactone oxidase 4 from Arabidopsis thaliana (Mouse-ear cress).